The sequence spans 512 residues: 2-isopropylmalate synthase (512 aa).

Positions 4-266 (IQFFDTTLRD…ETNIVLNQFK (263 aa)) constitute a Pyruvate carboxyltransferase domain. Positions 13, 201, 203, and 237 each coordinate Mn(2+). Residues 390–512 (ELKHLQVQYV…SKQADFEEVK (123 aa)) are regulatory domain.

Belongs to the alpha-IPM synthase/homocitrate synthase family. LeuA type 1 subfamily. Homodimer. It depends on Mn(2+) as a cofactor.

It localises to the cytoplasm. The catalysed reaction is 3-methyl-2-oxobutanoate + acetyl-CoA + H2O = (2S)-2-isopropylmalate + CoA + H(+). It functions in the pathway amino-acid biosynthesis; L-leucine biosynthesis; L-leucine from 3-methyl-2-oxobutanoate: step 1/4. In terms of biological role, catalyzes the condensation of the acetyl group of acetyl-CoA with 3-methyl-2-oxobutanoate (2-ketoisovalerate) to form 3-carboxy-3-hydroxy-4-methylpentanoate (2-isopropylmalate). The chain is 2-isopropylmalate synthase from Listeria monocytogenes serotype 4b (strain CLIP80459).